The following is a 280-amino-acid chain: Acetylglutamate kinase (280 aa).

Substrate is bound by residues 64–65, Arg-86, and Asn-179; that span reads GG.

The protein belongs to the acetylglutamate kinase family. ArgB subfamily.

It is found in the cytoplasm. The enzyme catalyses N-acetyl-L-glutamate + ATP = N-acetyl-L-glutamyl 5-phosphate + ADP. Its pathway is amino-acid biosynthesis; L-arginine biosynthesis; N(2)-acetyl-L-ornithine from L-glutamate: step 2/4. In terms of biological role, catalyzes the ATP-dependent phosphorylation of N-acetyl-L-glutamate. This chain is Acetylglutamate kinase, found in Campylobacter fetus subsp. fetus (strain 82-40).